Here is a 402-residue protein sequence, read N- to C-terminus: Mannonate dehydratase 1 (402 aa).

This sequence belongs to the mannonate dehydratase family. Fe(2+) serves as cofactor. It depends on Mn(2+) as a cofactor.

The catalysed reaction is D-mannonate = 2-dehydro-3-deoxy-D-gluconate + H2O. Its pathway is carbohydrate metabolism; pentose and glucuronate interconversion. Catalyzes the dehydration of D-mannonate. This chain is Mannonate dehydratase 1 (uxuA1), found in Agrobacterium fabrum (strain C58 / ATCC 33970) (Agrobacterium tumefaciens (strain C58)).